Consider the following 178-residue polypeptide: Large ribosomal subunit protein uL6 (178 aa).

It belongs to the universal ribosomal protein uL6 family. As to quaternary structure, part of the 50S ribosomal subunit.

In terms of biological role, this protein binds to the 23S rRNA, and is important in its secondary structure. It is located near the subunit interface in the base of the L7/L12 stalk, and near the tRNA binding site of the peptidyltransferase center. The chain is Large ribosomal subunit protein uL6 from Campylobacter fetus subsp. fetus (strain 82-40).